A 256-amino-acid polypeptide reads, in one-letter code: Ubiquinone/menaquinone biosynthesis C-methyltransferase UbiE (256 aa).

2 residues coordinate S-adenosyl-L-methionine: Thr-78 and Asp-99.

This sequence belongs to the class I-like SAM-binding methyltransferase superfamily. MenG/UbiE family.

The catalysed reaction is a 2-demethylmenaquinol + S-adenosyl-L-methionine = a menaquinol + S-adenosyl-L-homocysteine + H(+). It catalyses the reaction a 2-methoxy-6-(all-trans-polyprenyl)benzene-1,4-diol + S-adenosyl-L-methionine = a 5-methoxy-2-methyl-3-(all-trans-polyprenyl)benzene-1,4-diol + S-adenosyl-L-homocysteine + H(+). The protein operates within quinol/quinone metabolism; menaquinone biosynthesis; menaquinol from 1,4-dihydroxy-2-naphthoate: step 2/2. It functions in the pathway cofactor biosynthesis; ubiquinone biosynthesis. Methyltransferase required for the conversion of demethylmenaquinol (DMKH2) to menaquinol (MKH2) and the conversion of 2-polyprenyl-6-methoxy-1,4-benzoquinol (DDMQH2) to 2-polyprenyl-3-methyl-6-methoxy-1,4-benzoquinol (DMQH2). The protein is Ubiquinone/menaquinone biosynthesis C-methyltransferase UbiE of Geobacter sulfurreducens (strain ATCC 51573 / DSM 12127 / PCA).